A 520-amino-acid chain; its full sequence is MSFILVLCTVSSLFVGGGTGIFLYKKVSKKYIGDAKELAIRIVEEARKEGQAQKKEILLQGQNEIFNQKKEFEFDFKQREKELSIKDKKLQVQSERLEERLERAAEKEHEILKVEKELSIKERNLLTLEEQLKSRIDEQEKQLQKISGLTVEEAKQSLFEEVKNRSRHESAKMMRLIEAEAVETANRKAKEIIANAIQRYAGDYVSEHTVTAVTLPSEDMKGRIIGREGRNIRALESATGVDFIIDDTPETVVLSAYSPMRRQVAKMALERLIQDGRIHPARIEEIVRKCEEDLAIQVREIGEQATFDIGVYGIHPELIRILGQLNYRTSYTQNVLRHSIEVASLCGMMAAELGVDIKKAKRAGLLHDIGKAVDHEVEGSHAIIGAELAKKFNETEEIVHAIEAHHEEKGKPETALAILVQASDCLSGARPGARLELLESYVKRLEHLENIAGEFEGVSKAYAIQAGREVRVMVDADSIGDDQTYLLCKDIAGRIEESLTYPGQIRVTVIREHRAVGYAK.

The chain crosses the membrane as a helical span at residues 3 to 23 (FILVLCTVSSLFVGGGTGIFL). One can recognise a KH domain in the interval 209-272 (TVTAVTLPSE…QVAKMALERL (64 aa)). An HD domain is found at 335 to 429 (VLRHSIEVAS…VQASDCLSGA (95 aa)).

The protein belongs to the RNase Y family.

Its subcellular location is the cell membrane. Endoribonuclease that initiates mRNA decay. The protein is Ribonuclease Y of Lawsonia intracellularis (strain PHE/MN1-00).